The sequence spans 603 residues: Membrane protein insertase YidC (603 aa).

The helical transmembrane segment at 7–27 threads the bilayer; the sequence is FFITIALSVLILAVWQYFYVL. A compositionally biased stretch (basic and acidic residues) spans 38–51; sequence RVEQQRVEEQKKAA. Residues 38–76 form a disordered region; sequence RVEQQRVEEQKKAAEAANPGAGTPAPAPGTIPNAPGGDT. The segment covering 52 to 74 has biased composition (low complexity); that stretch reads EAANPGAGTPAPAPGTIPNAPGG. The next 5 membrane-spanning stretches (helical) occupy residues 352-372, 378-398, 452-472, 497-517, and 540-560; these read FDLLIDWGWFHFITKPMFWLI, FLGNFGLAILATTVIVKALFF, WPVALQIPVFFSLYKVLYITI, LFGLIPVTLPHMLMIGVWPLI, and IFTWMPVIFTFMMAGFPAGLV.

The protein belongs to the OXA1/ALB3/YidC family. Type 1 subfamily. Interacts with the Sec translocase complex via SecD. Specifically interacts with transmembrane segments of nascent integral membrane proteins during membrane integration.

The protein localises to the cell inner membrane. In terms of biological role, required for the insertion and/or proper folding and/or complex formation of integral membrane proteins into the membrane. Involved in integration of membrane proteins that insert both dependently and independently of the Sec translocase complex, as well as at least some lipoproteins. Aids folding of multispanning membrane proteins. This Mesorhizobium japonicum (strain LMG 29417 / CECT 9101 / MAFF 303099) (Mesorhizobium loti (strain MAFF 303099)) protein is Membrane protein insertase YidC.